A 288-amino-acid chain; its full sequence is Cytochrome b-c1 complex catalytic subunit, mitochondrial (288 aa).

Residues 12–34 (SMVQKFIAGGVGVTGLTASYLLY) traverse the membrane as a helical segment. In terms of domain architecture, Cytochrome c spans 69–222 (ASIRRGFQVY…DLVEYEDGTP (154 aa)). Heme c contacts are provided by cysteine 82, cysteine 85, and histidine 86. A compositionally biased stretch (acidic residues) spans 111–121 (EELEYDDEPDD). Residues 111–138 (EELEYDDEPDDEGKPRKRPGKLADYIPG) are disordered. A helical membrane pass occupies residues 250–268 (WGLKALVVLSSLYLLSIWV).

The protein belongs to the cytochrome c family. As to quaternary structure, component of the ubiquinol-cytochrome c oxidoreductase (cytochrome b-c1 complex, complex III, CIII), a multisubunit enzyme composed of 10 subunits. The complex is composed of 3 respiratory subunits cytochrome b (COB), cytochrome c1 (CYT1) and Rieske protein (RIP1), 2 core protein subunits COR1 and QCR2, and 5 low-molecular weight protein subunits QCR6, QCR7, QCR8, QCR9 and QCR10. The complex exists as an obligatory dimer and forms supercomplexes (SCs) in the inner mitochondrial membrane with a monomer or a dimer of cytochrome c oxidase (complex IV, CIV), resulting in 2 different assemblies (supercomplexes III(2)IV and III(2)IV(2)). Heme c serves as cofactor.

Its subcellular location is the mitochondrion inner membrane. The catalysed reaction is a quinol + 2 Fe(III)-[cytochrome c](out) = a quinone + 2 Fe(II)-[cytochrome c](out) + 2 H(+)(out). Its function is as follows. Component of the ubiquinol-cytochrome c oxidoreductase, a multisubunit transmembrane complex that is part of the mitochondrial electron transport chain which drives oxidative phosphorylation. The complex plays an important role in the uptake of multiple carbon sources present in different host niches. This is Cytochrome b-c1 complex catalytic subunit, mitochondrial from Candida albicans (strain SC5314 / ATCC MYA-2876) (Yeast).